Consider the following 196-residue polypeptide: Cyclin-dependent kinase inhibitor 6 (196 aa).

2 disordered regions span residues Met-1–His-36 and Ala-55–Pro-151. Residues Ser-124 to Ala-139 show a composition bias toward low complexity. Thr-152 is modified (phosphothreonine; by KIN10).

It belongs to the CDI family. ICK/KRP subfamily. In terms of assembly, specifically interacts with CDKA-1, but not with CDKB1-1. Interacts with CYCD1-1, CYCD4-1 and RHF1A. Binds to FBL17. Interacts with KIN10. Interacts with CYCD3-1. Ubiquitinated by RHF1A and SCF(FBL17). Ubiquitination leads to its subsequent degradation, thus controlling cell cycle progression. In terms of processing, the phosphorylation at Thr-152 by KIN10 represses its activity. In terms of tissue distribution, expressed in newly formed organs such as the shoot apex. Expressed in cotyledon, primary root and marginal region of the leaves as well as in developing pollen.

It localises to the nucleus. The protein resides in the nucleoplasm. Down-regulated by KIN10 under a phosphorylation-dependent manner. Its function is as follows. Binds and inhibits CYCD2-1/CDKA-1 complex kinase activity. Regulates cell division which is crucial for plant growth, development and morphogenesis. May inhibit CDK kinases specifically involved in the G1/S phase transition. The protein is Cyclin-dependent kinase inhibitor 6 (KRP6) of Arabidopsis thaliana (Mouse-ear cress).